The sequence spans 433 residues: 5-methylthioadenosine/S-adenosylhomocysteine deaminase (433 aa).

Residues His-67 and His-69 each contribute to the Zn(2+) site. Substrate-binding residues include Glu-96, Arg-148, and His-186. A Zn(2+)-binding site is contributed by His-213. The substrate site is built by Glu-216 and Asp-301. Asp-301 is a binding site for Zn(2+).

The protein belongs to the metallo-dependent hydrolases superfamily. MTA/SAH deaminase family. Zn(2+) is required as a cofactor.

It catalyses the reaction S-adenosyl-L-homocysteine + H2O + H(+) = S-inosyl-L-homocysteine + NH4(+). The enzyme catalyses S-methyl-5'-thioadenosine + H2O + H(+) = S-methyl-5'-thioinosine + NH4(+). In terms of biological role, catalyzes the deamination of 5-methylthioadenosine and S-adenosyl-L-homocysteine into 5-methylthioinosine and S-inosyl-L-homocysteine, respectively. Is also able to deaminate adenosine. The chain is 5-methylthioadenosine/S-adenosylhomocysteine deaminase from Desulforamulus reducens (strain ATCC BAA-1160 / DSM 100696 / MI-1) (Desulfotomaculum reducens).